Consider the following 428-residue polypeptide: Light-independent protochlorophyllide reductase subunit N (428 aa).

The [4Fe-4S] cluster site is built by C29, C54, and C115.

This sequence belongs to the BchN/ChlN family. As to quaternary structure, protochlorophyllide reductase is composed of three subunits; BchL, BchN and BchB. Forms a heterotetramer of two BchB and two BchN subunits. It depends on [4Fe-4S] cluster as a cofactor.

It carries out the reaction chlorophyllide a + oxidized 2[4Fe-4S]-[ferredoxin] + 2 ADP + 2 phosphate = protochlorophyllide a + reduced 2[4Fe-4S]-[ferredoxin] + 2 ATP + 2 H2O. It functions in the pathway porphyrin-containing compound metabolism; bacteriochlorophyll biosynthesis (light-independent). Its function is as follows. Component of the dark-operative protochlorophyllide reductase (DPOR) that uses Mg-ATP and reduced ferredoxin to reduce ring D of protochlorophyllide (Pchlide) to form chlorophyllide a (Chlide). This reaction is light-independent. The NB-protein (BchN-BchB) is the catalytic component of the complex. The sequence is that of Light-independent protochlorophyllide reductase subunit N from Roseobacter denitrificans (strain ATCC 33942 / OCh 114) (Erythrobacter sp. (strain OCh 114)).